Reading from the N-terminus, the 289-residue chain is Formamidopyrimidine-DNA glycosylase (289 aa).

The Schiff-base intermediate with DNA role is filled by Pro-2. Catalysis depends on Glu-3, which acts as the Proton donor. Lys-60 functions as the Proton donor; for beta-elimination activity in the catalytic mechanism. Residues His-94, Arg-126, and Arg-167 each coordinate DNA. The FPG-type zinc-finger motif lies at 252–287; that stretch reads QVYGKPAGTPCPRCGTGLARIRIAGRSSVFCPRCQP. The active-site Proton donor; for delta-elimination activity is the Arg-277.

Belongs to the FPG family. In terms of assembly, monomer. Zn(2+) serves as cofactor.

The catalysed reaction is Hydrolysis of DNA containing ring-opened 7-methylguanine residues, releasing 2,6-diamino-4-hydroxy-5-(N-methyl)formamidopyrimidine.. The enzyme catalyses 2'-deoxyribonucleotide-(2'-deoxyribose 5'-phosphate)-2'-deoxyribonucleotide-DNA = a 3'-end 2'-deoxyribonucleotide-(2,3-dehydro-2,3-deoxyribose 5'-phosphate)-DNA + a 5'-end 5'-phospho-2'-deoxyribonucleoside-DNA + H(+). In terms of biological role, involved in base excision repair of DNA damaged by oxidation or by mutagenic agents. Acts as a DNA glycosylase that recognizes and removes damaged bases. Has a preference for oxidized purines, such as 7,8-dihydro-8-oxoguanine (8-oxoG). Has AP (apurinic/apyrimidinic) lyase activity and introduces nicks in the DNA strand. Cleaves the DNA backbone by beta-delta elimination to generate a single-strand break at the site of the removed base with both 3'- and 5'-phosphates. This Thermomicrobium roseum (strain ATCC 27502 / DSM 5159 / P-2) protein is Formamidopyrimidine-DNA glycosylase.